The following is a 1638-amino-acid chain: DNA polymerase III PolC-type (1638 aa).

A disordered region spans residues 193–212; sequence SEIKKQRSEERESKNTREAK. Over residues 194–212 the composition is skewed to basic and acidic residues; that stretch reads EIKKQRSEERESKNTREAK. The Exonuclease domain occupies 596-752; it reads YVVFDVETTG…FDAEATGRLL (157 aa).

It belongs to the DNA polymerase type-C family. PolC subfamily.

The protein localises to the cytoplasm. It catalyses the reaction DNA(n) + a 2'-deoxyribonucleoside 5'-triphosphate = DNA(n+1) + diphosphate. Functionally, required for replicative DNA synthesis. This DNA polymerase also exhibits 3' to 5' exonuclease activity. The polypeptide is DNA polymerase III PolC-type (Lactococcus lactis subsp. lactis (strain IL1403) (Streptococcus lactis)).